The chain runs to 138 residues: Protein PsiE homolog (138 aa).

4 helical membrane-spanning segments follow: residues 12–34, 56–76, 84–104, and 109–129; these read YLLQ…ALLI, YEML…ALII, HFPL…LIII, and AIST…FFIA.

The protein belongs to the PsiE family.

The protein localises to the cell membrane. The polypeptide is Protein PsiE homolog (Bacillus subtilis (strain 168)).